The primary structure comprises 249 residues: 1-(5-phosphoribosyl)-5-[(5-phosphoribosylamino)methylideneamino] imidazole-4-carboxamide isomerase (249 aa).

Residue Asp11 is the Proton acceptor of the active site. Catalysis depends on Asp133, which acts as the Proton donor.

Belongs to the HisA/HisF family.

The protein localises to the cytoplasm. It catalyses the reaction 1-(5-phospho-beta-D-ribosyl)-5-[(5-phospho-beta-D-ribosylamino)methylideneamino]imidazole-4-carboxamide = 5-[(5-phospho-1-deoxy-D-ribulos-1-ylimino)methylamino]-1-(5-phospho-beta-D-ribosyl)imidazole-4-carboxamide. Its pathway is amino-acid biosynthesis; L-histidine biosynthesis; L-histidine from 5-phospho-alpha-D-ribose 1-diphosphate: step 4/9. In Mannheimia succiniciproducens (strain KCTC 0769BP / MBEL55E), this protein is 1-(5-phosphoribosyl)-5-[(5-phosphoribosylamino)methylideneamino] imidazole-4-carboxamide isomerase.